The sequence spans 322 residues: Labrum-interacting protein from saliva LIPS-2 (322 aa).

The first 20 residues, 1–20 (MKTSLPIVVLLTAVISGVHP), serve as a signal peptide directing secretion. A disulfide bond links Cys27 and Cys62. N-linked (GlcNAc...) asparagine glycosylation is found at Asn168 and Asn175. Cys249 and Cys295 are disulfide-bonded.

In terms of assembly, monomer in solution. Interacts (via the N-terminal domain) with cuticular protein Cp19 (via the C-terminus). Proteolytically cleaved by human mast cell tryptase and chymase. Post-translationally, glycosylated. As to expression, female salivary gland (at protein level). Female saliva (at protein level).

It localises to the secreted. Functionally, salivary protein that promotes mosquito blood feeding on the vertebrate host by inducing morphological changes in the mosquito labrum. Interacts with the mosquito labrum end tip and triggers salivation and probing. Modulates enzymatic activities of human tryptase and chymase. The polypeptide is Labrum-interacting protein from saliva LIPS-2 (Aedes albopictus (Asian tiger mosquito)).